The sequence spans 289 residues: Light-independent protochlorophyllide reductase iron-sulfur ATP-binding protein (289 aa).

ATP-binding positions include 10-15 (GIGKST) and Lys39. Residue Ser14 coordinates Mg(2+). Residues Cys95 and Cys129 each coordinate [4Fe-4S] cluster. 180 to 181 (NR) lines the ATP pocket.

This sequence belongs to the NifH/BchL/ChlL family. As to quaternary structure, homodimer. Protochlorophyllide reductase is composed of three subunits; ChlL, ChlN and ChlB. It depends on [4Fe-4S] cluster as a cofactor.

The protein resides in the plastid. The protein localises to the chloroplast. The enzyme catalyses chlorophyllide a + oxidized 2[4Fe-4S]-[ferredoxin] + 2 ADP + 2 phosphate = protochlorophyllide a + reduced 2[4Fe-4S]-[ferredoxin] + 2 ATP + 2 H2O. The protein operates within porphyrin-containing compound metabolism; chlorophyll biosynthesis (light-independent). In terms of biological role, component of the dark-operative protochlorophyllide reductase (DPOR) that uses Mg-ATP and reduced ferredoxin to reduce ring D of protochlorophyllide (Pchlide) to form chlorophyllide a (Chlide). This reaction is light-independent. The L component serves as a unique electron donor to the NB-component of the complex, and binds Mg-ATP. This is Light-independent protochlorophyllide reductase iron-sulfur ATP-binding protein from Tetradesmus obliquus (Green alga).